The chain runs to 141 residues: ATP synthase epsilon chain (141 aa).

Belongs to the ATPase epsilon chain family. In terms of assembly, F-type ATPases have 2 components, CF(1) - the catalytic core - and CF(0) - the membrane proton channel. CF(1) has five subunits: alpha(3), beta(3), gamma(1), delta(1), epsilon(1). CF(0) has three main subunits: a, b and c.

It is found in the cell inner membrane. Its function is as follows. Produces ATP from ADP in the presence of a proton gradient across the membrane. In Bordetella avium (strain 197N), this protein is ATP synthase epsilon chain.